Here is a 140-residue protein sequence, read N- to C-terminus: C-type lectin 6 (140 aa).

The signal sequence occupies residues 1–23 (MGRLVFVSFGLLVVFLSLSGTGA). 3 cysteine pairs are disulfide-bonded: cysteine 25/cysteine 36, cysteine 53/cysteine 138, and cysteine 115/cysteine 130. The 108-residue stretch at 32 to 139 (YEGHCYRVFQ…CSKTHNVICK (108 aa)) folds into the C-type lectin domain.

It belongs to the snaclec family. In terms of assembly, heteromultimer; disulfide-linked. As to expression, expressed by the venom gland.

Its subcellular location is the secreted. Its function is as follows. Interferes with one step of hemostasis (modulation of platelet aggregation, or coagulation cascade, for example). In Crotalus adamanteus (Eastern diamondback rattlesnake), this protein is C-type lectin 6.